The chain runs to 25 residues: Cysteine-rich venom protein 25 (25 aa).

Residues 1-25 (NVDFNSESTRRKKKQKEIVDLXNSL) are disordered.

This sequence belongs to the CRISP family. In terms of processing, contains 8 disulfide bonds. As to expression, expressed by the venom gland.

It localises to the secreted. In Naja haje haje (Egyptian cobra), this protein is Cysteine-rich venom protein 25.